The following is a 188-amino-acid chain: Putative lipoprotein LprB (188 aa).

A signal peptide spans 1-27 (MRCDVRALALAARGLIELMIVIPMVAG). The N-palmitoyl cysteine moiety is linked to residue Cys-28. Cys-28 carries S-diacylglycerol cysteine lipidation.

The protein resides in the cell membrane. This is Putative lipoprotein LprB (lprB) from Mycobacterium leprae (strain TN).